Here is a 158-residue protein sequence, read N- to C-terminus: Transcription elongation factor GreA (158 aa).

Residues 4–75 (EKTYPMTQEG…TQLENMIRNA (72 aa)) are a coiled coil.

Belongs to the GreA/GreB family.

Its function is as follows. Necessary for efficient RNA polymerase transcription elongation past template-encoded arresting sites. The arresting sites in DNA have the property of trapping a certain fraction of elongating RNA polymerases that pass through, resulting in locked ternary complexes. Cleavage of the nascent transcript by cleavage factors such as GreA or GreB allows the resumption of elongation from the new 3'terminus. GreA releases sequences of 2 to 3 nucleotides. This Bacillus cereus (strain ATCC 10987 / NRS 248) protein is Transcription elongation factor GreA.